The chain runs to 516 residues: Circadian clock oscillator protein KaiC (516 aa).

KaiC domains lie at 1–244 and 258–516; these read MNQP…INIF and ARIS…TLPE. Glycine 46, threonine 47, glycine 48, lysine 49, threonine 50, leucine 51, serine 86, lysine 221, leucine 222, arginine 223, threonine 225, histidine 227, threonine 237, threonine 287, glycine 288, threonine 289, glycine 290, lysine 291, threonine 292, and leucine 293 together coordinate ATP. Threonine 50 lines the Mg(2+) pocket. Threonine 292 contributes to the Mg(2+) binding site. Glutamate 315 is a binding site for Mg(2+). Tryptophan 328 is a binding site for ATP. At serine 428 the chain carries Phosphoserine; by autocatalysis. At threonine 429 the chain carries Phosphothreonine; by autocatalysis. ATP contacts are provided by arginine 448, lysine 454, methionine 455, arginine 456, serine 458, histidine 460, and lysine 462.

Belongs to the KaiC family. As to quaternary structure, homohexamer; hexamerization is dependent on ATP-binding. The KaiABC complex composition changes during the circadian cycle to control KaiC phosphorylation. Complexes KaiC(6), KaiA(2-4):KaiC(6), KaiB(6):KaiC(6) and KaiC(6):KaiB(6):KaiA(12) are among the most important forms, many form cooperatively. KaiC interacts with SasA, activating its autokinase function and leading to RpaA activation. The cofactor is Mg(2+). Phosphorylated on serine and threonine residues by autocatalysis. Has a 4 step phosphorylation cycle; the autokinase acts first on Thr-429, then Ser-428. When Ser-428 is modified KaiC switches to an autophosphatase mode, acting first on phospho-Thr-429 then phospho-Ser-428.

It carries out the reaction L-seryl-[protein] + ATP = O-phospho-L-seryl-[protein] + ADP + H(+). The catalysed reaction is L-threonyl-[protein] + ATP = O-phospho-L-threonyl-[protein] + ADP + H(+). It catalyses the reaction ATP + H2O = ADP + phosphate + H(+). With respect to regulation, the interaction with KaiA enhances its phosphorylation status, while the interaction with KaiB decreases it. Functionally, central component of the KaiABC oscillator complex, which constitutes the main circadian regulator in cyanobacteria. Complex composition changes during the circadian cycle to control KaiC phosphorylation. KaiA stimulates KaiC autophosphorylation, while KaiB sequesters KaiA, leading to KaiC autodephosphorylation. Clock output pathways impact the RpaA transcriptional regulator. KaiC enhances the autophosphorylation activity of SasA, which then transfers its phosphate group to RpaA to activate it. KaiB and KaiC together enhance the phospho-RpaA dephosphatase activity of CikA. In terms of biological role, has a weak, temperature-independent ATPase activity; ATPase activity defines the circadian period. The phosphorylation state of KaiC modulates its ATPase activity and effects KaiB binding. The polypeptide is Circadian clock oscillator protein KaiC (Picosynechococcus sp. (strain ATCC 27264 / PCC 7002 / PR-6) (Agmenellum quadruplicatum)).